The following is a 508-amino-acid chain: MTANEFILALDQGTTSSRAIVFDRAGTVRGMGQREFRQHYPRPGWVEHDAGEIWQSQLEVAREALRNAGASAADLAALGITNQRETTLIWERATGRPLARAIVWQDRRTAAMCEKLLHDGHGRMLQERTGLVVDAYFSGTKLAWLLDHVPGARKMAERGELAFGTMDTWLVWQLTGGAVHSTDPSNASRTMLFDLHAQDWSDDILALLNIPRGILPRIAPSSARIGETLPEWLGGSIPIAGVAGDQQAATFGQACFTPGMAKNTYGTGCFMLMNVGDAPVASRHNLLSTVGWSLPAGNATHATYMVEGGVFMAGAAVQWLRDGLGIIQRSADIEALAASVADTDDVFMVPAFAGLGAPHWDPYARGTLVGMTRGTTRAHIARATLESIALQSAELLSCMNADSGIPLSELRVDGSAARNDLLMQMQADLLGVPVVRPRVPESTALGAAGLAGLAVGFWSSLDEFGAQWQAERTFEPAWPADVREARMQRWRQAVELSKGWSRPAAGHA.

An ADP-binding site is contributed by threonine 14. Residues threonine 14, threonine 15, and serine 16 each contribute to the ATP site. Threonine 14 serves as a coordination point for sn-glycerol 3-phosphate. Position 18 (arginine 18) interacts with ADP. Sn-glycerol 3-phosphate is bound by residues arginine 84, glutamate 85, tyrosine 136, and aspartate 245. Glycerol contacts are provided by arginine 84, glutamate 85, tyrosine 136, aspartate 245, and glutamine 246. ADP contacts are provided by threonine 267 and glycine 314. Residues threonine 267, glycine 314, and glutamine 318 each contribute to the ATP site. Residue asparagine 419 coordinates ADP.

The protein belongs to the FGGY kinase family.

It catalyses the reaction glycerol + ATP = sn-glycerol 3-phosphate + ADP + H(+). Its pathway is polyol metabolism; glycerol degradation via glycerol kinase pathway; sn-glycerol 3-phosphate from glycerol: step 1/1. With respect to regulation, inhibited by fructose 1,6-bisphosphate (FBP). Its function is as follows. Key enzyme in the regulation of glycerol uptake and metabolism. Catalyzes the phosphorylation of glycerol to yield sn-glycerol 3-phosphate. The sequence is that of Glycerol kinase from Bordetella pertussis (strain Tohama I / ATCC BAA-589 / NCTC 13251).